A 124-amino-acid polypeptide reads, in one-letter code: Small ribosomal subunit protein uS12 (124 aa).

The segment at 1-42 (MPTTQQLIRKGRKTEEETSDAPALEGSPQRRGVCTRVYTTTP) is disordered. 3-methylthioaspartic acid is present on D89. A disordered region spans residues 105-124 (AGVEERRQGRSKYGTKKPRE). Residues 113-124 (GRSKYGTKKPRE) show a composition bias toward basic residues.

Belongs to the universal ribosomal protein uS12 family. As to quaternary structure, part of the 30S ribosomal subunit. Contacts proteins S8 and S17. May interact with IF1 in the 30S initiation complex.

Its function is as follows. With S4 and S5 plays an important role in translational accuracy. Functionally, interacts with and stabilizes bases of the 16S rRNA that are involved in tRNA selection in the A site and with the mRNA backbone. Located at the interface of the 30S and 50S subunits, it traverses the body of the 30S subunit contacting proteins on the other side and probably holding the rRNA structure together. The combined cluster of proteins S8, S12 and S17 appears to hold together the shoulder and platform of the 30S subunit. The chain is Small ribosomal subunit protein uS12 from Salinibacter ruber (strain DSM 13855 / M31).